We begin with the raw amino-acid sequence, 203 residues long: MEAFTRLDAKAAPLPLANIDTDQIIPKQFLKTVERAGLAKGLFYDLRFDEQGREKPNFVLNRPEYKGAGVLVAGDNFGCGSSREHAPWALMDFGIRCVISTSFADIFYGNCFQNGLLPVVLKAEEVQQLMDEARGGNHVVSVDLEAQTVTSPSGAVFRFEIDPQRKDKMLRGLDAIGETLQSQKDIDVYEMKRALAQPWLEGA.

This sequence belongs to the LeuD family. LeuD type 1 subfamily. As to quaternary structure, heterodimer of LeuC and LeuD.

It carries out the reaction (2R,3S)-3-isopropylmalate = (2S)-2-isopropylmalate. The protein operates within amino-acid biosynthesis; L-leucine biosynthesis; L-leucine from 3-methyl-2-oxobutanoate: step 2/4. Its function is as follows. Catalyzes the isomerization between 2-isopropylmalate and 3-isopropylmalate, via the formation of 2-isopropylmaleate. The chain is 3-isopropylmalate dehydratase small subunit from Phenylobacterium zucineum (strain HLK1).